The following is a 588-amino-acid chain: Aspartate--tRNA ligase (588 aa).

Glu177 lines the L-aspartate pocket. An aspartate region spans residues 201–204 (QLFK). Arg223 is an L-aspartate binding site. ATP contacts are provided by residues 223–225 (RDE) and Gln232. Position 451 (His451) interacts with L-aspartate. Glu485 serves as a coordination point for ATP. Position 492 (Arg492) interacts with L-aspartate. 537 to 540 (GLDR) contacts ATP.

The protein belongs to the class-II aminoacyl-tRNA synthetase family. Type 1 subfamily. As to quaternary structure, homodimer.

The protein resides in the cytoplasm. It carries out the reaction tRNA(Asp) + L-aspartate + ATP = L-aspartyl-tRNA(Asp) + AMP + diphosphate. Catalyzes the attachment of L-aspartate to tRNA(Asp) in a two-step reaction: L-aspartate is first activated by ATP to form Asp-AMP and then transferred to the acceptor end of tRNA(Asp). This Staphylococcus haemolyticus (strain JCSC1435) protein is Aspartate--tRNA ligase.